A 296-amino-acid polypeptide reads, in one-letter code: Nucleotide-binding protein ABC3036 (296 aa).

Position 13–20 (13–20 (GMSGAGKS)) interacts with ATP. 64–67 (DLRG) provides a ligand contact to GTP.

This sequence belongs to the RapZ-like family.

Functionally, displays ATPase and GTPase activities. The sequence is that of Nucleotide-binding protein ABC3036 from Shouchella clausii (strain KSM-K16) (Alkalihalobacillus clausii).